The sequence spans 371 residues: Dual-specificity RNA methyltransferase RlmN (371 aa).

The active-site Proton acceptor is the Glu-86. One can recognise a Radical SAM core domain in the interval 105-338; the sequence is RHARYTICVS…CTIRQSKGLD (234 aa). A disulfide bond links Cys-112 and Cys-343. Residues Cys-119, Cys-123, and Cys-126 each coordinate [4Fe-4S] cluster. Residues 169–170, Ser-201, 224–226, and Asn-300 contribute to the S-adenosyl-L-methionine site; these read GE and SLH. The active-site S-methylcysteine intermediate is the Cys-343. Polar residues predominate over residues 348–363; it reads QRSQNLSPSNNNTSKP. Positions 348–371 are disordered; the sequence is QRSQNLSPSNNNTSKPSDIKKSES.

It belongs to the radical SAM superfamily. RlmN family. It depends on [4Fe-4S] cluster as a cofactor.

The protein resides in the cytoplasm. The catalysed reaction is adenosine(2503) in 23S rRNA + 2 reduced [2Fe-2S]-[ferredoxin] + 2 S-adenosyl-L-methionine = 2-methyladenosine(2503) in 23S rRNA + 5'-deoxyadenosine + L-methionine + 2 oxidized [2Fe-2S]-[ferredoxin] + S-adenosyl-L-homocysteine. The enzyme catalyses adenosine(37) in tRNA + 2 reduced [2Fe-2S]-[ferredoxin] + 2 S-adenosyl-L-methionine = 2-methyladenosine(37) in tRNA + 5'-deoxyadenosine + L-methionine + 2 oxidized [2Fe-2S]-[ferredoxin] + S-adenosyl-L-homocysteine. In terms of biological role, specifically methylates position 2 of adenine 2503 in 23S rRNA and position 2 of adenine 37 in tRNAs. m2A2503 modification seems to play a crucial role in the proofreading step occurring at the peptidyl transferase center and thus would serve to optimize ribosomal fidelity. The protein is Dual-specificity RNA methyltransferase RlmN of Campylobacter curvus (strain 525.92).